The sequence spans 154 residues: Myoglobin (154 aa).

Residues 2–148 (GLSDGEWQLV…FRNDMAAKYK (147 aa)) form the Globin domain. Serine 4 carries the post-translational modification Phosphoserine. Residue histidine 65 coordinates nitrite. O2 is bound at residue histidine 65. Threonine 68 carries the post-translational modification Phosphothreonine. Heme b is bound at residue histidine 94.

This sequence belongs to the globin family. As to quaternary structure, monomeric.

It is found in the cytoplasm. It localises to the sarcoplasm. It catalyses the reaction Fe(III)-heme b-[protein] + nitric oxide + H2O = Fe(II)-heme b-[protein] + nitrite + 2 H(+). It carries out the reaction H2O2 + AH2 = A + 2 H2O. Monomeric heme protein which primary function is to store oxygen and facilitate its diffusion within muscle tissues. Reversibly binds oxygen through a pentacoordinated heme iron and enables its timely and efficient release as needed during periods of heightened demand. Depending on the oxidative conditions of tissues and cells, and in addition to its ability to bind oxygen, it also has a nitrite reductase activity whereby it regulates the production of bioactive nitric oxide. Under stress conditions, like hypoxia and anoxia, it also protects cells against reactive oxygen species thanks to its pseudoperoxidase activity. The chain is Myoglobin (MB) from Ochotona princeps (Southern American pika).